A 256-amino-acid polypeptide reads, in one-letter code: Imidazole glycerol phosphate synthase subunit HisF (256 aa).

Catalysis depends on residues Asp11 and Asp130.

The protein belongs to the HisA/HisF family. As to quaternary structure, heterodimer of HisH and HisF.

It localises to the cytoplasm. It carries out the reaction 5-[(5-phospho-1-deoxy-D-ribulos-1-ylimino)methylamino]-1-(5-phospho-beta-D-ribosyl)imidazole-4-carboxamide + L-glutamine = D-erythro-1-(imidazol-4-yl)glycerol 3-phosphate + 5-amino-1-(5-phospho-beta-D-ribosyl)imidazole-4-carboxamide + L-glutamate + H(+). It functions in the pathway amino-acid biosynthesis; L-histidine biosynthesis; L-histidine from 5-phospho-alpha-D-ribose 1-diphosphate: step 5/9. In terms of biological role, IGPS catalyzes the conversion of PRFAR and glutamine to IGP, AICAR and glutamate. The HisF subunit catalyzes the cyclization activity that produces IGP and AICAR from PRFAR using the ammonia provided by the HisH subunit. This Prochlorococcus marinus (strain AS9601) protein is Imidazole glycerol phosphate synthase subunit HisF.